The sequence spans 496 residues: Glutamyl-tRNA(Gln) amidotransferase subunit A (496 aa).

Active-site charge relay system residues include Lys79 and Ser159. Ser183 functions as the Acyl-ester intermediate in the catalytic mechanism.

This sequence belongs to the amidase family. GatA subfamily. Heterotrimer of A, B and C subunits.

It catalyses the reaction L-glutamyl-tRNA(Gln) + L-glutamine + ATP + H2O = L-glutaminyl-tRNA(Gln) + L-glutamate + ADP + phosphate + H(+). Functionally, allows the formation of correctly charged Gln-tRNA(Gln) through the transamidation of misacylated Glu-tRNA(Gln) in organisms which lack glutaminyl-tRNA synthetase. The reaction takes place in the presence of glutamine and ATP through an activated gamma-phospho-Glu-tRNA(Gln). This chain is Glutamyl-tRNA(Gln) amidotransferase subunit A, found in Bartonella quintana (strain Toulouse) (Rochalimaea quintana).